The primary structure comprises 425 residues: E3 ubiquitin-protein ligase GW2 (425 aa).

The segment at 62-105 (CPICFLYYPSLNRSKCCSKGICTECFLQMKPTHTAQPTQCPFCK) adopts an RING-type; degenerate zinc-finger fold.

As to expression, expressed in roots, shoots, leaves, inflorescence meristems, stamens, pistils, spikelet hulls and endosperms 4 days after fertilization.

It is found in the cytoplasm. The catalysed reaction is S-ubiquitinyl-[E2 ubiquitin-conjugating enzyme]-L-cysteine + [acceptor protein]-L-lysine = [E2 ubiquitin-conjugating enzyme]-L-cysteine + N(6)-ubiquitinyl-[acceptor protein]-L-lysine.. It functions in the pathway protein modification; protein ubiquitination. E3 ubiquitin-protein ligase involved in the regulation of grain size. May limit grain width and weight by restricting cell proliferation of the spikelet hull. Possesses E3 ubiquitin-protein ligase activity in vitro. In Oryza sativa subsp. indica (Rice), this protein is E3 ubiquitin-protein ligase GW2.